The chain runs to 212 residues: Cytidylate kinase (212 aa).

Position 7–15 (7–15 (GPAASGKGT)) interacts with ATP.

The protein belongs to the cytidylate kinase family. Type 1 subfamily.

The protein localises to the cytoplasm. The enzyme catalyses CMP + ATP = CDP + ADP. The catalysed reaction is dCMP + ATP = dCDP + ADP. This is Cytidylate kinase from Rhodopseudomonas palustris (strain BisB18).